The following is a 541-amino-acid chain: GMP synthase [glutamine-hydrolyzing] (541 aa).

Positions 17 to 212 (TILVLDFGSQ…AVDICQSTTD (196 aa)) constitute a Glutamine amidotransferase type-1 domain. Cys93 acts as the Nucleophile in catalysis. Residues His186 and Glu188 contribute to the active site. One can recognise a GMPS ATP-PPase domain in the interval 213–416 (WTMGKFVDQE…LGIPEDLVWR (204 aa)). 241–247 (SGGVDST) is a binding site for ATP. XMP contacts are provided by Arg315, Asp478, Lys533, and Glu539.

As to quaternary structure, homodimer. It depends on Mg(2+) as a cofactor.

The protein resides in the cytoplasm. It localises to the cytosol. The enzyme catalyses XMP + L-glutamine + ATP + H2O = GMP + L-glutamate + AMP + diphosphate + 2 H(+). It functions in the pathway purine metabolism; GMP biosynthesis; GMP from XMP (L-Gln route): step 1/1. Functionally, catalyzes the conversion of xanthine monophosphate (XMP) to GMP in the presence of glutamine and ATP through an adenyl-XMP intermediate. This Phaeosphaeria nodorum (strain SN15 / ATCC MYA-4574 / FGSC 10173) (Glume blotch fungus) protein is GMP synthase [glutamine-hydrolyzing] (GUA1).